Here is a 361-residue protein sequence, read N- to C-terminus: S-adenosylmethionine decarboxylase proenzyme (361 aa).

Catalysis depends on residues Glu13 and Glu16. The Schiff-base intermediate with substrate; via pyruvic acid role is filled by Ser73. Ser73 is modified (pyruvic acid (Ser); by autocatalysis). The Proton donor; for catalytic activity role is filled by Cys87. Catalysis depends on proton acceptor; for processing activity residues Ser236 and His249.

Belongs to the eukaryotic AdoMetDC family. Requires pyruvate as cofactor. Post-translationally, is synthesized initially as an inactive proenzyme. Formation of the active enzyme involves a self-maturation process in which the active site pyruvoyl group is generated from an internal serine residue via an autocatalytic post-translational modification. Two non-identical subunits are generated from the proenzyme in this reaction, and the pyruvate is formed at the N-terminus of the alpha chain, which is derived from the carboxyl end of the proenzyme. The post-translation cleavage follows an unusual pathway, termed non-hydrolytic serinolysis, in which the side chain hydroxyl group of the serine supplies its oxygen atom to form the C-terminus of the beta chain, while the remainder of the serine residue undergoes an oxidative deamination to produce ammonia and the pyruvoyl group blocking the N-terminus of the alpha chain.

The catalysed reaction is S-adenosyl-L-methionine + H(+) = S-adenosyl 3-(methylsulfanyl)propylamine + CO2. It functions in the pathway amine and polyamine biosynthesis; S-adenosylmethioninamine biosynthesis; S-adenosylmethioninamine from S-adenosyl-L-methionine: step 1/1. In Nicotiana sylvestris (Wood tobacco), this protein is S-adenosylmethionine decarboxylase proenzyme (SAMDC1).